Consider the following 61-residue polypeptide: Probable tautomerase lmo2564 (61 aa).

Pro2 serves as the catalytic Proton acceptor; via imino nitrogen.

This sequence belongs to the 4-oxalocrotonate tautomerase family.

This Listeria monocytogenes serovar 1/2a (strain ATCC BAA-679 / EGD-e) protein is Probable tautomerase lmo2564.